We begin with the raw amino-acid sequence, 132 residues long: Small ribosomal subunit protein uS8 (132 aa).

This sequence belongs to the universal ribosomal protein uS8 family. Part of the 30S ribosomal subunit. Contacts proteins S5 and S12.

Its function is as follows. One of the primary rRNA binding proteins, it binds directly to 16S rRNA central domain where it helps coordinate assembly of the platform of the 30S subunit. This Mycolicibacterium vanbaalenii (strain DSM 7251 / JCM 13017 / BCRC 16820 / KCTC 9966 / NRRL B-24157 / PYR-1) (Mycobacterium vanbaalenii) protein is Small ribosomal subunit protein uS8.